The chain runs to 427 residues: Glutamate-1-semialdehyde 2,1-aminomutase (427 aa).

N6-(pyridoxal phosphate)lysine is present on Lys-265.

This sequence belongs to the class-III pyridoxal-phosphate-dependent aminotransferase family. HemL subfamily. Homodimer. It depends on pyridoxal 5'-phosphate as a cofactor.

The protein localises to the cytoplasm. The enzyme catalyses (S)-4-amino-5-oxopentanoate = 5-aminolevulinate. Its pathway is porphyrin-containing compound metabolism; protoporphyrin-IX biosynthesis; 5-aminolevulinate from L-glutamyl-tRNA(Glu): step 2/2. The protein is Glutamate-1-semialdehyde 2,1-aminomutase of Paraburkholderia phytofirmans (strain DSM 17436 / LMG 22146 / PsJN) (Burkholderia phytofirmans).